Consider the following 424-residue polypeptide: CUGBP Elav-like family member 4 (424 aa).

Positions 8–27 (VANGQPDNSSLSSNPTGHMN) are disordered. A compositionally biased stretch (polar residues) spans 9 to 24 (ANGQPDNSSLSSNPTG). RRM domains lie at 47 to 128 (IKLF…PADS) and 342 to 417 (PQPP…LKRP).

The protein belongs to the CELF/BRUNOL family.

It localises to the nucleus. The protein localises to the cytoplasm. RNA-binding protein that may be implicated in the regulation of pre-mRNA alternative splicing. This chain is CUGBP Elav-like family member 4 (celf4), found in Xenopus tropicalis (Western clawed frog).